Reading from the N-terminus, the 1133-residue chain is MVSETTTNRSTVKISNVPQTIVADELLRFLELHLGEDTVFALEIPTTRDNWKPRDFARVQFTTLEVKSRAQLLSSQSKLLFKTHNLRLSEAYDDIIPRPVDPRKRLDDIVLTVGFPESDEKRFCALEKWDGVRCWILTEKRRVEFWVWESGDCYKIEVRFEDIIETLSCCVNGDASEIDAFLLKLKYGPKVFKRVTVHIATKFKSDRYRFCKEDFDFMWIRTTDFSGSKSIGTSTCFCLEVHNGSTMLDIFSGLPYYREDTLSLTYVDGKTFASAAQIVPLLNAAILGLEFPYEILFQLNALVHAQKISLFAASDMELIKILRGMSLETALVILKKLHQQSSICYDPVFFVKTQMQSVVKKMKHSPASAYKRLTEQNIMSCQRAYVTPSKIYLLGPELETANYVVKNFAEHVSDFMRVTFVEEDWSKLPANALSVNSKEGYFVKPSRTNIYNRVLSILGEGITVGPKRFEFLAFSASQLRGNSVWMFASNEKVKAEDIREWMGCFRKIRSISKCAARMGQLFSASRQTLIVRAQDVEQIPDIEVTTDGADYCFSDGIGKISLAFAKQVAQKCGLSHVPSAFQIRYGGYKGVIAVDRSSFRKLSLRDSMLKFDSNNRMLNVTRWTESMPCFLNREIICLLSTLGIEDAMFEAMQAVHLSMLGNMLEDRDAALNVLQKLSGENSKNLLVKMLLQGYAPSSEPYLSMMLRVHHESQLSELKSRCRILVPKGRILIGCMDEMGILEYGQVYVRVTLTKAELKSRDQSYFRKIDEETSVVIGKVVVTKNPCLHPGDIRVLDAIYEVHFEEKGYLDCIIFPQKGERPHPNECSGGDLDGDQFFVSWDEKIIPSEMDPPMDYAGSRPRLMDHDVTLEEIHKFFVDYMISDTLGVISTAHLVHADRDPEKARSQKCLELANLHSRAVDFAKTGAPAEMPYALKPREFPDFLERFEKPTYISESVFGKLYRAVKSSLAQRKPEAESEDTVAYDVTLEEAGFESFIETAKAHRDMYGEKLTSLMIYYGAANEEEILTGILKTKEMYLARDNRRYGDMKDRITLSVKDLHKEAMGWFEKSCEDEQQKKKLASAWYYVTYNPNHRDEKLTFLSFPWIVGDVLLDIKAENAQRQSVEEKTSGLVSI.

3 residues coordinate Mg(2+): Asp830, Asp832, and Asp834.

Belongs to the RdRP family. As to quaternary structure, interacts with NRPD1 and SHH1. Associates with Pol IV complex, forming an interpolymerase channel bridging their active sites, through which the Pol IV-generated transcript is handed over to the RDR2 active site after being backtracked, where it is used as the template for double-stranded RNA (dsRNA) synthesis. Interacts with JMJ24.

The protein resides in the nucleus. It localises to the nucleoplasm. The protein localises to the nucleolus. The catalysed reaction is RNA(n) + a ribonucleoside 5'-triphosphate = RNA(n+1) + diphosphate. RNA-dependent direct polymerase involved in the production of small interfering RNAs (siRNAs). Binds to single-stranded RNA (ssRNA); engages ssRNAs longer than 7 nucleotides and initiates internal to their 3' ends. Able to transcribe the RNA of an RNA/DNA hybrid, the transcript produced by Pol IV, if its 3' end is accessible, to generate double-stranded small interfering RNAs (dsRNAs) precursor essential for establishing and maintaining DNA methylation. Required for the biogenesis of endogenous siRNAs of 24 nucleotide which derive from heterochromatin and DNA repeats such as transposons or endogenous gene tandem repeats, such as repeats present in FWA gene. Involved in transcriptional gene silencing (TGS). Component of the RNA-directed DNA methylation (RdDM) silencing pathway that utilizes siRNAs to guide DNA methyltransferases to asymmetric cytosines. Involved in control of flowering time through RdDM of FWA locus. Required for reception of long-distance mRNA silencing in the shoot. Required for the formation of telomeric siRNAs and the RNA-dependent DNA methylation of asymmetric cytosines in telomeric (5'-CCCTAAA-3') repeats. This Arabidopsis thaliana (Mouse-ear cress) protein is RNA-dependent RNA polymerase 2.